Reading from the N-terminus, the 83-residue chain is Phosphoribosylformylglycinamidine synthase subunit PurS (83 aa).

This sequence belongs to the PurS family. In terms of assembly, homodimer. Part of the FGAM synthase complex composed of 1 PurL, 1 PurQ and 2 PurS subunits.

It is found in the cytoplasm. The enzyme catalyses N(2)-formyl-N(1)-(5-phospho-beta-D-ribosyl)glycinamide + L-glutamine + ATP + H2O = 2-formamido-N(1)-(5-O-phospho-beta-D-ribosyl)acetamidine + L-glutamate + ADP + phosphate + H(+). It participates in purine metabolism; IMP biosynthesis via de novo pathway; 5-amino-1-(5-phospho-D-ribosyl)imidazole from N(2)-formyl-N(1)-(5-phospho-D-ribosyl)glycinamide: step 1/2. Functionally, part of the phosphoribosylformylglycinamidine synthase complex involved in the purines biosynthetic pathway. Catalyzes the ATP-dependent conversion of formylglycinamide ribonucleotide (FGAR) and glutamine to yield formylglycinamidine ribonucleotide (FGAM) and glutamate. The FGAM synthase complex is composed of three subunits. PurQ produces an ammonia molecule by converting glutamine to glutamate. PurL transfers the ammonia molecule to FGAR to form FGAM in an ATP-dependent manner. PurS interacts with PurQ and PurL and is thought to assist in the transfer of the ammonia molecule from PurQ to PurL. This chain is Phosphoribosylformylglycinamidine synthase subunit PurS, found in Methanocaldococcus jannaschii (strain ATCC 43067 / DSM 2661 / JAL-1 / JCM 10045 / NBRC 100440) (Methanococcus jannaschii).